The primary structure comprises 212 residues: Adenylate kinase (212 aa).

ATP is bound at residue 10–15 (GAGKGT). The segment at 30 to 59 (STGDMFRAAIANQTEMGVLAKSYIDKGELV) is NMP. AMP-binding positions include Thr-31, Arg-36, 57 to 59 (ELV), 86 to 89 (GYPR), and Gln-93. Residues 127-159 (GRIIHRETGETFHKVFNPPADYKEEDYYQREDD) form an LID region. ATP-binding positions include Arg-128 and 137–138 (TF). Residues Arg-156 and Arg-167 each contribute to the AMP site. Residue Gln-195 participates in ATP binding.

It belongs to the adenylate kinase family. As to quaternary structure, monomer.

The protein resides in the cytoplasm. The catalysed reaction is AMP + ATP = 2 ADP. Its pathway is purine metabolism; AMP biosynthesis via salvage pathway; AMP from ADP: step 1/1. In terms of biological role, catalyzes the reversible transfer of the terminal phosphate group between ATP and AMP. Plays an important role in cellular energy homeostasis and in adenine nucleotide metabolism. The polypeptide is Adenylate kinase (Streptococcus sanguinis (strain SK36)).